The primary structure comprises 403 residues: Acetate kinase (403 aa).

Residue asparagine 13 coordinates Mg(2+). ATP is bound at residue lysine 20. Arginine 94 contacts substrate. Aspartate 153 (proton donor/acceptor) is an active-site residue. Residues 213-217 (HLGNG), 288-290 (DFR), and 336-340 (GIGEN) contribute to the ATP site. Glutamate 390 provides a ligand contact to Mg(2+).

It belongs to the acetokinase family. In terms of assembly, homodimer. Requires Mg(2+) as cofactor. The cofactor is Mn(2+).

It localises to the cytoplasm. The enzyme catalyses acetate + ATP = acetyl phosphate + ADP. Its pathway is metabolic intermediate biosynthesis; acetyl-CoA biosynthesis; acetyl-CoA from acetate: step 1/2. Functionally, catalyzes the formation of acetyl phosphate from acetate and ATP. Can also catalyze the reverse reaction. This is Acetate kinase from Buchnera aphidicola subsp. Schizaphis graminum (strain Sg).